The primary structure comprises 212 residues: ATP phosphoribosyltransferase (212 aa).

The protein belongs to the ATP phosphoribosyltransferase family. Short subfamily. In terms of assembly, heteromultimer composed of HisG and HisZ subunits.

It is found in the cytoplasm. It catalyses the reaction 1-(5-phospho-beta-D-ribosyl)-ATP + diphosphate = 5-phospho-alpha-D-ribose 1-diphosphate + ATP. It participates in amino-acid biosynthesis; L-histidine biosynthesis; L-histidine from 5-phospho-alpha-D-ribose 1-diphosphate: step 1/9. Catalyzes the condensation of ATP and 5-phosphoribose 1-diphosphate to form N'-(5'-phosphoribosyl)-ATP (PR-ATP). Has a crucial role in the pathway because the rate of histidine biosynthesis seems to be controlled primarily by regulation of HisG enzymatic activity. The protein is ATP phosphoribosyltransferase of Citrifermentans bemidjiense (strain ATCC BAA-1014 / DSM 16622 / JCM 12645 / Bem) (Geobacter bemidjiensis).